We begin with the raw amino-acid sequence, 428 residues long: Ectoine/5-hydroxyectoine TRAP transporter large permease protein UehC (428 aa).

Transmembrane regions (helical) follow at residues 9-29, 49-69, 99-119, 139-159, 172-192, 217-237, 242-262, 273-293, 302-322, 324-344, 366-386, and 400-420; these read MIVLLLLGFPMMIPLIAGAFI, LAGIRPASLIAVPMFIFAADI, AAACTMFGAVSGSTQATVVAI, ALIVNASDIAFLIPPSIGMII, FIAGIGPGLLILVLFSAYAYI, ALWPMGFPVIIIGGIYGGVFS, AAACVLYALVLEVLVFRSMSL, GLITAIVFILVGAGAAFSWVI, ILGAIGIAEMGPIGVLFVISI, FFIGCMFVDPIVVILVLVPVF, VAIGSATPPFGCDIFTAIAVF, and FILMLLGVSVALIFFPQIALF.

The protein belongs to the TRAP transporter large permease family. The complex comprises the extracytoplasmic solute receptor protein UehA, and the two transmembrane proteins UehB and UehC.

The protein resides in the cell inner membrane. Functionally, part of the tripartite ATP-independent periplasmic (TRAP) transport system UehABC, which imports both ectoine and 5-hydroxyectoine as nutrients, and not as osmoprotectants. This is Ectoine/5-hydroxyectoine TRAP transporter large permease protein UehC from Ruegeria pomeroyi (strain ATCC 700808 / DSM 15171 / DSS-3) (Silicibacter pomeroyi).